The chain runs to 427 residues: Adenylosuccinate synthetase (427 aa).

Residues 12–18 (GDEGKGK) and 40–42 (GHT) contribute to the GTP site. Catalysis depends on Asp13, which acts as the Proton acceptor. Mg(2+)-binding residues include Asp13 and Gly40. Residues 13-16 (DEGK), 38-41 (NAGH), Thr126, Arg140, Gln221, Thr236, and Arg299 contribute to the IMP site. His41 acts as the Proton donor in catalysis. Substrate is bound at residue 295 to 301 (STTKRPR). GTP is bound by residues Arg301, 327-329 (KLD), and 409-411 (SVG).

It belongs to the adenylosuccinate synthetase family. In terms of assembly, homodimer. Mg(2+) serves as cofactor.

Its subcellular location is the cytoplasm. It catalyses the reaction IMP + L-aspartate + GTP = N(6)-(1,2-dicarboxyethyl)-AMP + GDP + phosphate + 2 H(+). The protein operates within purine metabolism; AMP biosynthesis via de novo pathway; AMP from IMP: step 1/2. Its function is as follows. Plays an important role in the de novo pathway of purine nucleotide biosynthesis. Catalyzes the first committed step in the biosynthesis of AMP from IMP. The polypeptide is Adenylosuccinate synthetase (Borrelia duttonii (strain Ly)).